Here is a 202-residue protein sequence, read N- to C-terminus: Imidazoleglycerol-phosphate dehydratase (202 aa).

The protein belongs to the imidazoleglycerol-phosphate dehydratase family.

It localises to the cytoplasm. It catalyses the reaction D-erythro-1-(imidazol-4-yl)glycerol 3-phosphate = 3-(imidazol-4-yl)-2-oxopropyl phosphate + H2O. Its pathway is amino-acid biosynthesis; L-histidine biosynthesis; L-histidine from 5-phospho-alpha-D-ribose 1-diphosphate: step 6/9. The protein is Imidazoleglycerol-phosphate dehydratase of Synechococcus sp. (strain WH7803).